Reading from the N-terminus, the 503-residue chain is Poxin-Schlafen (503 aa).

The tract at residues 1–236 is poxin-like; that stretch reads MFYAHAFGGY…SKEERVDYVL (236 aa). His15 acts as the Proton donor in catalysis. Catalysis depends on Tyr136, which acts as the Shared with catalytic histidine of dimeric partner. Lys140 serves as the catalytic Proton acceptor; shared with catalytic histidine of dimeric partner. The tract at residues 237-503 is schlafen-like; it reads MKRLESIHHL…PDEWVSHIKF (267 aa).

In the N-terminal section; belongs to the poxin family. It in the C-terminal section; belongs to the Schlafen protein family. Subgroup poxviridae B3 subfamily. Homodimer.

It catalyses the reaction 2',3'-cGAMP + H2O = Gp(2'-5')Ap(3') + H(+). Nuclease that is responsible for viral evasion of host cGAS-STING innate immunity. Cleaves 2',3'-cGAMP which is produced by host cGAS following recognition of intracellular foreign DNA and blocks the subsequent 2',3'-cGAMP-mediated activation of TMEM173/STING which normally spreads to adjacent cells and activates the interferon and NF-kappa-B immune responses. This Cynomys gunnisoni (Gunnison's prairie dog) protein is Poxin-Schlafen (OPG188).